The primary structure comprises 423 residues: ATP-citrate synthase alpha chain protein 1 (423 aa).

Positions 343, 345, and 376 each coordinate citrate.

This sequence belongs to the succinate/malate CoA ligase beta subunit family. Heterooctamer of 4 alpha and 4 beta chains. As to expression, expressed in trichomes, epidermal leaf cells, anther tapetal cells, stigma and in young vascular bundles of expanding leaves, cotyledons, roots, pedicel of flowers and siliques.

Its subcellular location is the cytoplasm. The protein localises to the cytosol. The catalysed reaction is oxaloacetate + acetyl-CoA + ADP + phosphate = citrate + ATP + CoA. Functionally, ATP citrate-lyase is the primary enzyme responsible for the synthesis of cytosolic acetyl-CoA, used for the elongation of fatty acids and biosynthesis of isoprenoids, flavonoids and malonated derivatives. May supply substrate to the cytosolic acetyl-CoA carboxylase, which generates the malonyl-CoA used for the synthesis of a multitude of compounds, including very long chain fatty acids and flavonoids. Required for normal growth and development and elongation of C18 fatty acids to C20 to C24 fatty acids in seeds. In contrast to all known animal ACL enzymes having a homomeric structure, plant ACLs are composed of alpha and beta chains. This is ATP-citrate synthase alpha chain protein 1 (ACLA-1) from Arabidopsis thaliana (Mouse-ear cress).